The primary structure comprises 473 residues: Photosystem II CP43 reaction center protein (473 aa).

A propeptide spanning residues 1–14 (MKILYSLRRFYHVE) is cleaved from the precursor. Residue threonine 15 is modified to N-acetylthreonine. Threonine 15 carries the post-translational modification Phosphothreonine. 5 helical membrane-spanning segments follow: residues 69–93 (LFEV…PHLA), 134–155 (LLGP…KDRN), 178–200 (KALY…RKIT), 255–275 (KPFA…LSYS), and 291–312 (WFNN…ASQA). Glutamate 367 serves as a coordination point for [CaMn4O5] cluster. Residues 447-471 (RARAAAAGFEKGIDRDLEPVLYMNP) traverse the membrane as a helical segment.

The protein belongs to the PsbB/PsbC family. PsbC subfamily. As to quaternary structure, PSII is composed of 1 copy each of membrane proteins PsbA, PsbB, PsbC, PsbD, PsbE, PsbF, PsbH, PsbI, PsbJ, PsbK, PsbL, PsbM, PsbT, PsbX, PsbY, PsbZ, Psb30/Ycf12, at least 3 peripheral proteins of the oxygen-evolving complex and a large number of cofactors. It forms dimeric complexes. Binds multiple chlorophylls and provides some of the ligands for the Ca-4Mn-5O cluster of the oxygen-evolving complex. It may also provide a ligand for a Cl- that is required for oxygen evolution. PSII binds additional chlorophylls, carotenoids and specific lipids. is required as a cofactor.

The protein resides in the plastid. It is found in the chloroplast thylakoid membrane. One of the components of the core complex of photosystem II (PSII). It binds chlorophyll and helps catalyze the primary light-induced photochemical processes of PSII. PSII is a light-driven water:plastoquinone oxidoreductase, using light energy to abstract electrons from H(2)O, generating O(2) and a proton gradient subsequently used for ATP formation. The sequence is that of Photosystem II CP43 reaction center protein from Hordeum vulgare (Barley).